A 24-amino-acid chain; its full sequence is General odorant-binding protein (24 aa).

It belongs to the PBP/GOBP family. As to quaternary structure, homodimer. As to expression, antenna.

Functionally, present in the aqueous fluid surrounding olfactory sensory dendrites and are thought to aid in the capture and transport of hydrophobic odorants into and through this fluid. This chain is General odorant-binding protein, found in Antheraea polyphemus (Polyphemus moth).